A 118-amino-acid chain; its full sequence is Small ribosomal subunit protein uS13 (118 aa).

Residues 94–118 (SLPVRGQRTKTNARTRKGPRKPIKK) are disordered.

The protein belongs to the universal ribosomal protein uS13 family. Part of the 30S ribosomal subunit. Forms a loose heterodimer with protein S19. Forms two bridges to the 50S subunit in the 70S ribosome.

Its function is as follows. Located at the top of the head of the 30S subunit, it contacts several helices of the 16S rRNA. In the 70S ribosome it contacts the 23S rRNA (bridge B1a) and protein L5 of the 50S subunit (bridge B1b), connecting the 2 subunits; these bridges are implicated in subunit movement. Contacts the tRNAs in the A and P-sites. In Haemophilus influenzae (strain 86-028NP), this protein is Small ribosomal subunit protein uS13.